The chain runs to 821 residues: Calpain-3 (821 aa).

The tract at residues 1 to 37 (MPTVISPTVAPRTGAEPRSPGPVPHPAQGKTTEAGGG) is disordered. A Calpain catalytic domain is found at 74–417 (LYLDPEFPPD…FTKLEICNLT (344 aa)). Active-site residues include cysteine 129, histidine 334, and asparagine 358. A domain III region spans residues 418 to 586 (ADALESDKLQ…KRNLSEEAEN (169 aa)). Residues 587–649 (TISVDRPVKK…RPGHTDQESE (63 aa)) are linker. Residues 603–651 (IFVSDRANSNKELGVDQEAEEGKDKTGPDKQGESPQPRPGHTDQESEEQ) are disordered. Over residues 622–634 (EEGKDKTGPDKQG) the composition is skewed to basic and acidic residues. EF-hand domains are found at residues 649-683 (EEQQ…VVNK), 692-725 (FTLE…KKIK), 722-757 (KKIK…AGFH), and 787-821 (VRLE…TMYA). The interval 650–820 (EQQQFRNIFR…VLEWLQLTMY (171 aa)) is domain IV. Residues alanine 662, aspartate 665, glutamate 667, glutamate 672, aspartate 705, aspartate 707, serine 709, arginine 711, glutamate 716, aspartate 735, aspartate 737, serine 739, threonine 741, glutamate 746, aspartate 800, aspartate 802, aspartate 804, and isoleucine 806 each contribute to the Ca(2+) site.

Belongs to the peptidase C2 family. As to quaternary structure, homodimer; via EF-hand domain 4. Interacts with TTN/titin. Interacts with CMYA5; this interaction, which results in CMYA5 proteolysis, may protect CAPN3 from autolysis. Interacts with SIMC1. Interacts with UTP25; the interaction is required for CAPN3 translocation to the nucleolus. In terms of tissue distribution, skeletal muscle.

It localises to the cytoplasm. The protein localises to the nucleus. The protein resides in the nucleolus. The enzyme catalyses Broad endopeptidase activity.. Its activity is regulated as follows. Activated by micromolar concentrations of calcium and inhibited by calpastatin. Its function is as follows. Calcium-regulated non-lysosomal thiol-protease. Proteolytically cleaves CTBP1 at 'His-399'. Mediates, with UTP25, the proteasome-independent degradation of p53/TP53. The sequence is that of Calpain-3 (Capn3) from Rattus norvegicus (Rat).